The chain runs to 241 residues: Large ribosomal subunit protein uL1 (241 aa).

It belongs to the universal ribosomal protein uL1 family. Part of the 50S ribosomal subunit.

In terms of biological role, binds directly to 23S rRNA. The L1 stalk is quite mobile in the ribosome, and is involved in E site tRNA release. Its function is as follows. Protein L1 is also a translational repressor protein, it controls the translation of the L11 operon by binding to its mRNA. This chain is Large ribosomal subunit protein uL1, found in Thermomicrobium roseum (strain ATCC 27502 / DSM 5159 / P-2).